We begin with the raw amino-acid sequence, 198 residues long: Superoxide dismutase [Mn], mitochondrial (198 aa).

Residue His26 participates in Mn(2+) binding. Tyr34 carries the 3'-nitrotyrosine modification. Residues Lys44 and Lys51 each carry the N6-acetyllysine; alternate modification. N6-succinyllysine; alternate occurs at positions 44 and 51. His74 contributes to the Mn(2+) binding site. N6-acetyllysine is present on Lys90. Lys98 and Lys106 each carry N6-acetyllysine; alternate. 2 positions are modified to N6-succinyllysine; alternate: Lys98 and Lys106. Mn(2+) is bound by residues Asp159 and His163. Position 178 is an N6-acetyllysine (Lys178).

It belongs to the iron/manganese superoxide dismutase family. Homotetramer. Requires Mn(2+) as cofactor. Nitrated under oxidative stress. Nitration coupled with oxidation inhibits the catalytic activity. Post-translationally, acetylation at Lys-98 decreases enzymatic activity. Deacetylated by SIRT3 upon exposure to ionizing radiations or after long fasting. In terms of processing, polyubiquitinated; leading to proteasomal degradation. Deubiquitinated by USP36 which increases protein stability.

It localises to the mitochondrion matrix. The enzyme catalyses 2 superoxide + 2 H(+) = H2O2 + O2. Functionally, destroys superoxide anion radicals which are normally produced within the cells and which are toxic to biological systems. This chain is Superoxide dismutase [Mn], mitochondrial (SOD2), found in Pan troglodytes (Chimpanzee).